The sequence spans 733 residues: Zinc finger transcription factor ace1 (733 aa).

Over residues 1-11 (MSFSNPRRRTP) the composition is skewed to basic residues. Disordered stretches follow at residues 1-22 (MSFS…CEHG), 34-63 (GATF…SQSA), and 89-183 (ASLS…SSTT). Low complexity predominate over residues 39 to 49 (SPTSPSASSAA). Residues 132 to 142 (LRPRSVRRTRN) show a composition bias toward basic residues. A compositionally biased stretch (polar residues) spans 148–158 (GIGSSVVSTND). Low complexity predominate over residues 171–183 (ASALTRSAASSTT). 3 consecutive C2H2-type zinc fingers follow at residues 400 to 424 (KKCR…EKTH), 428 to 456 (WKCP…NDKH), and 463 to 488 (YECL…EKAH). Residues 497 to 533 (TNGKKAPSQNGSTAQQTPPLANVSTPSSTPSYSVPTP) form a disordered region. The segment covering 503-515 (PSQNGSTAQQTPP) has biased composition (polar residues). A compositionally biased stretch (low complexity) spans 519–530 (VSTPSSTPSYSV).

It is found in the nucleus. Its function is as follows. Binds to the promoter of the cbh1 gene and activates transcription. This is Zinc finger transcription factor ace1 (ace1) from Hypocrea jecorina (Trichoderma reesei).